Reading from the N-terminus, the 693-residue chain is Oxysterol-binding protein-related protein 2B (693 aa).

Residues 1 to 15 are compositionally biased toward polar residues; sequence MPLTRSKSLPATENG. Positions 1–22 are disordered; sequence MPLTRSKSLPATENGGSDRETL. In terms of domain architecture, PH spans 25-154; it reads GRSVAGILYK…WLQALASTRG (130 aa). The stretch at 207–239 forms a coiled coil; that stretch reads EVQEQIKLLHEERKKLLDALRQLEMANLEAEAS. 2 disordered regions span residues 256 to 298 and 600 to 639; these read LGRG…GEPD and EKLP…RMSR. Positions 274–284 are enriched in acidic residues; that stretch reads QEFEDISEEDE. 2 stretches are compositionally biased toward basic and acidic residues: residues 285–294 and 600–635; these read ASFHDTKESF and EKLP…ERRQ. A coiled-coil region spans residues 612–643; the sequence is DQRHLENGEYEKANEEKQRLERRQRMSRQIQE.

This sequence belongs to the OSBP family. As to expression, expressed in roots, leaves, stems and flowers.

May be involved in the transport of sterols. This chain is Oxysterol-binding protein-related protein 2B (ORP2B), found in Arabidopsis thaliana (Mouse-ear cress).